A 931-amino-acid chain; its full sequence is Kinesin heavy chain (931 aa).

Residues 6 to 329 (SIKVVARFRP…LRFGMRAKSI (324 aa)) enclose the Kinesin motor domain. ATP is bound by residues 87–94 (GQTGAGKS) and 237–244 (GSEKVGKT). The stretch at 342 to 864 (AELKSLLKKA…VKERLELAKA (523 aa)) forms a coiled coil. Disordered stretches follow at residues 388-465 (TTDA…EKQL) and 886-931 (AKPL…FTKS). Over residues 402-419 (STRPSTPSLISDSRSETP) the composition is skewed to polar residues. Basic and acidic residues predominate over residues 432 to 456 (LDKDEREEFLRRENELQDQISEKES). A compositionally biased stretch (polar residues) spans 902–931 (PTIQNLQGQNEGNTSSGSSSKRASWFFTKS).

Belongs to the TRAFAC class myosin-kinesin ATPase superfamily. Kinesin family. Kinesin subfamily.

It is found in the cytoplasm. Its subcellular location is the cytoskeleton. In terms of biological role, kinesin is a microtubule-associated force-producing protein that may play a role in organelle transport. Its motor activity is directed toward the microtubule's plus end. The protein is Kinesin heavy chain (KLP1) of Gibberella moniliformis (Maize ear and stalk rot fungus).